The primary structure comprises 376 residues: Glucose-1-phosphate adenylyltransferase (376 aa).

Residues tyrosine 101, glycine 166, 181–182 (EK), and serine 192 contribute to the alpha-D-glucose 1-phosphate site.

It belongs to the bacterial/plant glucose-1-phosphate adenylyltransferase family. In terms of assembly, homotetramer.

It catalyses the reaction alpha-D-glucose 1-phosphate + ATP + H(+) = ADP-alpha-D-glucose + diphosphate. Its pathway is glycan biosynthesis; glycogen biosynthesis. Functionally, involved in the biosynthesis of ADP-glucose, a building block required for the elongation reactions to produce glycogen. Catalyzes the reaction between ATP and alpha-D-glucose 1-phosphate (G1P) to produce pyrophosphate and ADP-Glc. The sequence is that of Glucose-1-phosphate adenylyltransferase from Bacillus cereus (strain Q1).